The sequence spans 322 residues: Acetyl-coenzyme A carboxylase carboxyl transferase subunit alpha 2 (322 aa).

The CoA carboxyltransferase C-terminal domain maps to 37–294 (EINRLSARSE…KRVLQESLRN (258 aa)).

This sequence belongs to the AccA family. Acetyl-CoA carboxylase is a heterohexamer composed of biotin carboxyl carrier protein (AccB), biotin carboxylase (AccC) and two subunits each of ACCase subunit alpha (AccA) and ACCase subunit beta (AccD).

The protein localises to the cytoplasm. The enzyme catalyses N(6)-carboxybiotinyl-L-lysyl-[protein] + acetyl-CoA = N(6)-biotinyl-L-lysyl-[protein] + malonyl-CoA. The protein operates within lipid metabolism; malonyl-CoA biosynthesis; malonyl-CoA from acetyl-CoA: step 1/1. Its function is as follows. Component of the acetyl coenzyme A carboxylase (ACC) complex. First, biotin carboxylase catalyzes the carboxylation of biotin on its carrier protein (BCCP) and then the CO(2) group is transferred by the carboxyltransferase to acetyl-CoA to form malonyl-CoA. In terms of biological role, confers resistance to the endogenous polyketide antibiotic thailandamide. Can replace the endogenous gene in S.typhimurium, conferring slow growth and resistance to thailandamide. Can also replace the endogenous gene in E.coli, conferring resistance to thailandamide. This chain is Acetyl-coenzyme A carboxylase carboxyl transferase subunit alpha 2, found in Burkholderia thailandensis (strain ATCC 700388 / DSM 13276 / CCUG 48851 / CIP 106301 / E264).